We begin with the raw amino-acid sequence, 358 residues long: Protein phosphatase 1 regulatory subunit 3G (358 aa).

The tract at residues 1 to 71 (MEPIGARLSL…KEEAAPQEQE (71 aa)) is disordered. A compositionally biased stretch (low complexity) spans 11–29 (EAPGPAPFREAPPAEELPA). A Phosphoserine modification is found at Ser-86. The 141-residue stretch at 210-350 (AERLQRQRVC…NNAGANYTLR (141 aa)) folds into the CBM21 domain. Positions 270–280 (EPLEPQQPEAP) are enriched in low complexity. Residues 270–295 (EPLEPQQPEAPSGASEPGSGDAKKEP) are disordered.

In terms of biological role, glycogen-targeting subunit for protein phosphatase 1 (PP1). Involved in the regulation of hepatic glycogenesis in a manner coupled to the fasting-feeding cycle and distinct from other glycogen-targeting subunits. In Homo sapiens (Human), this protein is Protein phosphatase 1 regulatory subunit 3G (PPP1R3G).